Consider the following 305-residue polypeptide: UDP-3-O-acyl-N-acetylglucosamine deacetylase (305 aa).

3 residues coordinate Zn(2+): histidine 79, histidine 238, and aspartate 242. Residue histidine 265 is the Proton donor of the active site.

Belongs to the LpxC family. The cofactor is Zn(2+).

The enzyme catalyses a UDP-3-O-[(3R)-3-hydroxyacyl]-N-acetyl-alpha-D-glucosamine + H2O = a UDP-3-O-[(3R)-3-hydroxyacyl]-alpha-D-glucosamine + acetate. Its pathway is glycolipid biosynthesis; lipid IV(A) biosynthesis; lipid IV(A) from (3R)-3-hydroxytetradecanoyl-[acyl-carrier-protein] and UDP-N-acetyl-alpha-D-glucosamine: step 2/6. Catalyzes the hydrolysis of UDP-3-O-myristoyl-N-acetylglucosamine to form UDP-3-O-myristoylglucosamine and acetate, the committed step in lipid A biosynthesis. The chain is UDP-3-O-acyl-N-acetylglucosamine deacetylase from Haemophilus influenzae (strain PittGG).